Reading from the N-terminus, the 118-residue chain is Protein TusC (118 aa).

Belongs to the DsrF/TusC family. Heterohexamer, formed by a dimer of trimers. The hexameric TusBCD complex contains 2 copies each of TusB, TusC and TusD. The TusBCD complex interacts with TusE.

It localises to the cytoplasm. Its function is as follows. Part of a sulfur-relay system required for 2-thiolation of 5-methylaminomethyl-2-thiouridine (mnm(5)s(2)U) at tRNA wobble positions. The sequence is that of Protein TusC from Salmonella typhimurium (strain LT2 / SGSC1412 / ATCC 700720).